Consider the following 399-residue polypeptide: Ankyrin repeat domain-containing protein 65 (399 aa).

ANK repeat units follow at residues 40 to 69 (QGWG…SVEE), 73 to 102 (AGRT…PVGA), 106 to 135 (AGRT…SAAA), 139 to 168 (TGLT…PGPA), 176 to 205 (RGWT…GLDG), 207 to 231 (LLVA…RVDA), 235 to 264 (AGAT…DPGI), 268 to 297 (HGRS…EVDA), 301 to 330 (LGLT…QVDA), and 334 to 363 (LRKT…SPTL). Positions 377 to 399 (DLPQALPELGGGEKECEGIESTG) are disordered.

The polypeptide is Ankyrin repeat domain-containing protein 65 (ANKRD65) (Homo sapiens (Human)).